The chain runs to 133 residues: Pheromone-regulated membrane protein 3 (133 aa).

Residues 1 to 104 (MTAMKEDNAA…SKVQRENKGS (104 aa)) lie on the Nuclear side of the membrane. A disordered region spans residues 36-100 (ADGFVINKAK…DASESKVQRE (65 aa)). Positions 69–75 (GRVRKHK) match the Bipartite nuclear localization signal motif. Basic and acidic residues predominate over residues 90–100 (KDASESKVQRE). A helical membrane pass occupies residues 105 to 127 (FYQGAIFGSFLGAAVTTVLSNLA). At 128 to 133 (VKALQN) the chain is on the perinuclear space side.

In terms of assembly, interacts with KAR5.

Its subcellular location is the nucleus outer membrane. It is found in the cytoplasm. The protein resides in the cytoskeleton. It localises to the microtubule organizing center. The protein localises to the spindle pole body. Functionally, required for the fusion of nuclear envelopes during mating, ensuring proper karyogamy. Plays a role in the initiation of outer nuclear envelope fusion. The protein is Pheromone-regulated membrane protein 3 (PRM3) of Saccharomyces cerevisiae (strain ATCC 204508 / S288c) (Baker's yeast).